The chain runs to 125 residues: Mitochondrial import inner membrane translocase subunit tim16-A (125 aa).

A J-like region spans residues 58 to 110; sequence EAQQILNVSKLTPEEIQKNYEHLFKVNDKGLGGSFYLQSKVVRAKERLDQEME.

The protein belongs to the TIM16/PAM16 family. Probable component of the PAM complex at least composed of 1 mitochondrial HSP70 protein, 1 GRPE, 1 TIMM44, 1 TIMM16/PAM16 and 1 TIMM14. Associates with the TIM23 complex.

It is found in the mitochondrion inner membrane. Functionally, regulates ATP-dependent protein translocation into the mitochondrial matrix. The sequence is that of Mitochondrial import inner membrane translocase subunit tim16-A (pam16-a) from Xenopus laevis (African clawed frog).